A 1406-amino-acid chain; its full sequence is MSEPKTASERYQKISQLEHILKRPDTYIGSVEIQEQEQWIYDEETDCMIDKTVNIVPGLFKIFDEILVNAADNKVRDPSMKRIDVTINPEENFIEVRNDGKGIPIEIHEKEKIYIPELIFGHLLTSSNYDDDEKKVTGGRNGYGAKLCNIFSTEFTLETADPKNGRKYVQTWENNMNVCHPPKITSYKKGPSYTKVAFKPDLSRFGMESLDSDILGVMRRRVYDINGSVRDVNVYLNGKPLKIRNFKNYVELYLKSLEKMRKMDNGESDTTPSNIPTILYERVSDRWEIAFAVSDISFKQVSFVNSIATTTGGTHVNYIADQIVRKVSDILKKKKKNIKPYQIKNNMFIFINCLIENPAFTSQTKEQLTTRVKDFGSRCDISSDYINKIMKTDLATKIFEIADENANNALKKSDGSRKSRITDYPKLEDANKAGTKDGYKCTLILTEGDSALSLAVAGLAVVGRDYYGCYPLRGKMLNVREATADQILKNAEIQAIKKIMGLQHRKKYEDTKSLRYGHLMIMTDQDHDGSHIKGLIINFIETSFPGLLDIPGFLIEFITPIVKVTITKPIKKVISFFNLPDYEKWREEESHKYSWKQKYYKGLGTSTSPEIIEYFSNLDTHLKKFHALQGDDKDLIDLAFSKKKADDRKEWLRQYEPGTVLDPTLNEIPISDFINKELILFSLADNVRSIPSVLDGFKPGQRKVLYTCFKKNLTTEKKVANLAPAVSDYTAYHHGEQALVQTIIGMAQNFVGTNNIYFLKPNGAFGTRATGGKDAAAARYIYTELNKIARKVFHPADDPLFRYVQEDEKTVEPEWYLPVVPMVLINGAEGIGTGWSTSIPPFNPLDVVNNIRHLLNDEEMDDMHPWFRGWTGTMEKIESQRYRMYGRIEQVGPNTLEITELPARTWTSTIKEHLLLGLGGSEKVKPWIKDMEEQHAETIKFIIKLTDEEMTKTRKLGFYERFKLISPISLQNMVAFDYRGKIKKYDHVHEILKDFYEVRLEYYQKRKDYMTGRLQWEAEKLSFQVKFIKMIIDKSLIVTNKPKKQLISELEELGFPRINKEGKPHFGKIDEEVEAIISEDEDEDLEESEEATRKKDKDDESTVNGPEELFGTYEYLLGLKIWSLTKERYEKLLKQKQEKETELENLLKLSAKDLWNNDLDDFLTAYEDFQKMDLFLRNSAVPKTKGGKRKRKGGDDDDYDPSGKKKPARRIKKIKKEDDFDRILIKPQAKIKAKRPVKVKVEPPSSAASTPSVKEELGVSDVTSNASTPSTTIFDQKVKQENSDESGISAFSSKFNKIASAFDEDAPLDQITSEDTSVKESSAPAAKKKAPPKRKAKVVESSEDELSDANLSEQDDEEVVPVRRQRSSRQTAKKSYAEPIEISDEEDFIDDDEDEEVDSDESFNDE.

ATP is bound by residues Asn-69, Asn-98, 126-128 (SSN), and 139-146 (GRNGYGAK). The interval 332–334 (KKK) is interaction with DNA. 363–365 (QTK) is an ATP binding site. Residues 441 to 555 (CTLILTEGDS…GLLDIPGFLI (115 aa)) form the Toprim domain. Glu-447, Asp-524, and Asp-526 together coordinate Mg(2+). The Topo IIA-type catalytic domain occupies 690 to 1159 (IPSVLDGFKP…SAKDLWNNDL (470 aa)). The active-site O-(5'-phospho-DNA)-tyrosine intermediate is the Tyr-780. The interval 963-972 (KLISPISLQN) is interaction with DNA. Over residues 1079 to 1089 (EDEDEDLEESE) the composition is skewed to acidic residues. Disordered regions lie at residues 1079–1106 (EDED…VNGP), 1183–1215 (KTKG…KKIK), 1230–1287 (KIKA…DESG), and 1303–1406 (DEDA…FNDE). Over residues 1090 to 1100 (EATRKKDKDDE) the composition is skewed to basic and acidic residues. A compositionally biased stretch (basic residues) spans 1204–1214 (KKKPARRIKKI). Positions 1261–1274 (DVTSNASTPSTTIF) are enriched in polar residues. Residues 1326 to 1336 (AKKKAPPKRKA) are compositionally biased toward basic residues. Composition is skewed to acidic residues over residues 1341–1359 (SSED…DEEV) and 1381–1406 (EISD…FNDE).

Belongs to the type II topoisomerase family. In terms of assembly, homodimer. Mg(2+) is required as a cofactor. The cofactor is Mn(2+). Ca(2+) serves as cofactor.

Its subcellular location is the nucleus. The catalysed reaction is ATP-dependent breakage, passage and rejoining of double-stranded DNA.. In terms of biological role, control of topological states of DNA by transient breakage and subsequent rejoining of DNA strands. Topoisomerase II makes double-strand breaks. This chain is DNA topoisomerase 2 (TOP2), found in Candida glabrata (strain ATCC 2001 / BCRC 20586 / JCM 3761 / NBRC 0622 / NRRL Y-65 / CBS 138) (Yeast).